Here is a 639-residue protein sequence, read N- to C-terminus: Chaperone protein DnaK (639 aa).

A Phosphothreonine; by autocatalysis modification is found at Thr-198. Residues 603–618 (AKAQTQGGAQEGAAKQ) show a composition bias toward low complexity. Positions 603–639 (AKAQTQGGAQEGAAKQSNATADDVVDAEFEEVKDDKK) are disordered. Acidic residues predominate over residues 625 to 639 (DVVDAEFEEVKDDKK).

This sequence belongs to the heat shock protein 70 family.

Acts as a chaperone. This is Chaperone protein DnaK from Shewanella sp. (strain MR-7).